We begin with the raw amino-acid sequence, 374 residues long: Chaperone protein DnaJ (374 aa).

One can recognise a J domain in the interval Asp5–Gly70. The CR-type zinc finger occupies Gly132–Thr210. Zn(2+)-binding residues include Cys145, Cys148, Cys162, Cys165, Cys184, Cys187, Cys198, and Cys201. 4 CXXCXGXG motif repeats span residues Cys145–Gly152, Cys162–Gly169, Cys184–Gly191, and Cys198–Gly205.

Belongs to the DnaJ family. As to quaternary structure, homodimer. It depends on Zn(2+) as a cofactor.

Its subcellular location is the cytoplasm. Functionally, participates actively in the response to hyperosmotic and heat shock by preventing the aggregation of stress-denatured proteins and by disaggregating proteins, also in an autonomous, DnaK-independent fashion. Unfolded proteins bind initially to DnaJ; upon interaction with the DnaJ-bound protein, DnaK hydrolyzes its bound ATP, resulting in the formation of a stable complex. GrpE releases ADP from DnaK; ATP binding to DnaK triggers the release of the substrate protein, thus completing the reaction cycle. Several rounds of ATP-dependent interactions between DnaJ, DnaK and GrpE are required for fully efficient folding. Also involved, together with DnaK and GrpE, in the DNA replication of plasmids through activation of initiation proteins. The sequence is that of Chaperone protein DnaJ from Saccharophagus degradans (strain 2-40 / ATCC 43961 / DSM 17024).